The following is a 501-amino-acid chain: Aldehyde dehydrogenase mpl4 (501 aa).

An NAD(+)-binding site is contributed by 231 to 236 (GSTASG). Active-site residues include glutamate 253 and cysteine 287.

The protein belongs to the aldehyde dehydrogenase family.

It catalyses the reaction an aldehyde + NAD(+) + H2O = a carboxylate + NADH + 2 H(+). The protein operates within mycotoxin biosynthesis. Aldehyde dehydrogenase; part of the gene cluster that mediates the biosynthesis of the mycotoxin citrinin, a hepato-nephrotoxic compound to humans due to inhibition of respiration complex III. The pathway begins with the synthesis of a keto-aldehyde intermediate by the citrinin PKS (pksCT) from successive condensations of 4 malonyl-CoA units, presumably with a simple acetyl-CoA starter unit. Release of the keto-aldehyde intermediate is consistent with the presence of the C-terminal reductive release domain. Mp11 collaborates with pksCT by catalyzing the hydrolysis of ACP-bound acyl intermediates to free the ACP from stalled intermediates. Mpl2 then catalyzes the oxidation of the C-12 methyl of the ketone intermediate to an alcohol intermediate which is further oxidized by the oxidoreductase mpl7 to produce a bisaldehyde intermediate. The fourth catalytic step is catalyzed by the mpl4 aldehyde dehydrogenase. The final transformation is the reduction of C-3 by mpl6 to provide the chemically stable citrinin nucleus. In Monascus purpureus (Red mold), this protein is Aldehyde dehydrogenase mpl4.